Reading from the N-terminus, the 364-residue chain is Phosphoserine aminotransferase (364 aa).

Position 41 (R41) interacts with L-glutamate. Pyridoxal 5'-phosphate-binding positions include 75–76 (AS), W100, T155, D175, and Q198. K199 bears the N6-(pyridoxal phosphate)lysine mark. 239 to 240 (NT) is a binding site for pyridoxal 5'-phosphate.

It belongs to the class-V pyridoxal-phosphate-dependent aminotransferase family. SerC subfamily. In terms of assembly, homodimer. Requires pyridoxal 5'-phosphate as cofactor.

It is found in the cytoplasm. The catalysed reaction is O-phospho-L-serine + 2-oxoglutarate = 3-phosphooxypyruvate + L-glutamate. The enzyme catalyses 4-(phosphooxy)-L-threonine + 2-oxoglutarate = (R)-3-hydroxy-2-oxo-4-phosphooxybutanoate + L-glutamate. It participates in amino-acid biosynthesis; L-serine biosynthesis; L-serine from 3-phospho-D-glycerate: step 2/3. In terms of biological role, catalyzes the reversible conversion of 3-phosphohydroxypyruvate to phosphoserine and of 3-hydroxy-2-oxo-4-phosphonooxybutanoate to phosphohydroxythreonine. This is Phosphoserine aminotransferase from Streptococcus uberis (strain ATCC BAA-854 / 0140J).